Here is a 160-residue protein sequence, read N- to C-terminus: Major strawberry allergen Fra a 1-E (160 aa).

It belongs to the BetVI family. Monomer. Interacts with AP. Highly expressed in roots. Expressed in open flowers. Expressed at low levels in leaves, flower buds and fruits.

Functionally, involved in the control of flavonoid biosynthesis in fruits, probably by binding directly to natural flavonoids. Binds the natural flavonoid quercetin-3-O-glucuronide with affinities in the low micromolar range. The chain is Major strawberry allergen Fra a 1-E from Fragaria ananassa (Strawberry).